The following is a 333-amino-acid chain: tRNA N6-adenosine threonylcarbamoyltransferase (333 aa).

Fe cation is bound by residues H111 and H115. Substrate is bound by residues 134–138 (LVSGG), D167, G180, and N272. A Fe cation-binding site is contributed by D300.

This sequence belongs to the KAE1 / TsaD family. The cofactor is Fe(2+).

The protein resides in the cytoplasm. The enzyme catalyses L-threonylcarbamoyladenylate + adenosine(37) in tRNA = N(6)-L-threonylcarbamoyladenosine(37) in tRNA + AMP + H(+). Its function is as follows. Required for the formation of a threonylcarbamoyl group on adenosine at position 37 (t(6)A37) in tRNAs that read codons beginning with adenine. Is involved in the transfer of the threonylcarbamoyl moiety of threonylcarbamoyl-AMP (TC-AMP) to the N6 group of A37, together with TsaE and TsaB. TsaD likely plays a direct catalytic role in this reaction. This Legionella pneumophila (strain Corby) protein is tRNA N6-adenosine threonylcarbamoyltransferase.